A 640-amino-acid polypeptide reads, in one-letter code: Threonine--tRNA ligase (640 aa).

In terms of domain architecture, TGS spans 1 to 61; that stretch reads MPIITLPNGD…TEDATLQIIT (61 aa). A catalytic region spans residues 242-533; the sequence is DHRKIGKALD…LIEHYAGFMP (292 aa). Zn(2+)-binding residues include Cys-333, His-384, and His-510.

The protein belongs to the class-II aminoacyl-tRNA synthetase family. As to quaternary structure, homodimer. Zn(2+) is required as a cofactor.

The protein localises to the cytoplasm. It catalyses the reaction tRNA(Thr) + L-threonine + ATP = L-threonyl-tRNA(Thr) + AMP + diphosphate + H(+). Functionally, catalyzes the attachment of threonine to tRNA(Thr) in a two-step reaction: L-threonine is first activated by ATP to form Thr-AMP and then transferred to the acceptor end of tRNA(Thr). Also edits incorrectly charged L-seryl-tRNA(Thr). This is Threonine--tRNA ligase from Acinetobacter baylyi (strain ATCC 33305 / BD413 / ADP1).